The primary structure comprises 169 residues: 16S rRNA aminocarboxypropyltransferase (169 aa).

S-adenosyl-L-methionine is bound by residues Thr17, Leu67, Leu90, and Thr109.

It belongs to the TDD superfamily. TSR3 family.

The protein localises to the cytoplasm. The enzyme catalyses an N(1)-methylpseudouridine in rRNA + S-adenosyl-L-methionine = N(1)-methyl-N(3)-[(3S)-3-amino-3-carboxypropyl]pseudouridine in rRNA + S-methyl-5'-thioadenosine + H(+). Aminocarboxypropyltransferase that catalyzes the aminocarboxypropyl transfer on pseudouridine corresponding to position 914 in M.jannaschii 16S rRNA. It constitutes the last step in biosynthesis of the hypermodified N1-methyl-N3-(3-amino-3-carboxypropyl) pseudouridine (m1acp3-Psi). The protein is 16S rRNA aminocarboxypropyltransferase of Methanothermobacter thermautotrophicus (strain ATCC 29096 / DSM 1053 / JCM 10044 / NBRC 100330 / Delta H) (Methanobacterium thermoautotrophicum).